The following is a 986-amino-acid chain: Probable ATP-dependent RNA helicase ddx42 (986 aa).

Disordered regions lie at residues 1–149 (MSKR…DEDD), 165–192 (AAIDNSKSIEKGQQQQQSLKSKRDDIDN), and 206–252 (QLAN…IEPL). The span at 29-82 (SNINNNNNSNNNNNNNNNNNNNNNNNNNKNNIGTGINLNIKNNNNINNNNNKSG) shows a compositional bias: low complexity. The segment covering 105–117 (PPKSSMTTLNKSP) has biased composition (polar residues). Low complexity predominate over residues 119 to 137 (NFENASSNNNNNNNNNNQE). A compositionally biased stretch (acidic residues) spans 217 to 236 (DDDVDYSSLDDDDGYFDDEE). The Q motif signature appears at 305–333 (TSFGHYGFDDILLQAIAKQSIETPTPIQK). Positions 336–511 (IPIALSGRDL…RTILSDPIKI (176 aa)) constitute a Helicase ATP-binding domain. 349-356 (AKTGSGKT) lines the ATP pocket. The DEAD box signature appears at 459-462 (DEAD). One can recognise a Helicase C-terminal domain in the interval 522–684 (DITQIVQVLK…FVPPELIDVA (163 aa)). A disordered region spans residues 688-986 (PHFKRERGGG…FNQRSQYNRR (299 aa)). Gly residues predominate over residues 696–723 (GGGGGSNRGRGRGGGGVGYRRNSRGGGV). Composition is skewed to low complexity over residues 753 to 764 (NPNNTDNSEINN) and 771 to 978 (NNEN…NNFN).

It belongs to the DEAD box helicase family. DDX42 subfamily.

It localises to the nucleus. The enzyme catalyses ATP + H2O = ADP + phosphate + H(+). Functionally, probable ATP-dependent RNA helicase which may bind to partially double-stranded RNAs (dsRNAs) in order to unwind RNA secondary structures. The chain is Probable ATP-dependent RNA helicase ddx42 (ddx42) from Dictyostelium discoideum (Social amoeba).